Reading from the N-terminus, the 190-residue chain is Interferon alpha-7 (190 aa).

The first 23 residues, 1 to 23 (MARLCAFLMVLAVMSYWPTCCLG), serve as a signal peptide directing secretion. 2 cysteine pairs are disulfide-bonded: Cys24–Cys122 and Cys52–Cys162. An N-linked (GlcNAc...) asparagine glycan is attached at Asn101.

The protein belongs to the alpha/beta interferon family.

Its subcellular location is the secreted. Produced by macrophages, IFN-alpha have antiviral activities. Interferon stimulates the production of two enzymes: a protein kinase and an oligoadenylate synthetase. This Mus musculus (Mouse) protein is Interferon alpha-7 (Ifna7).